A 108-amino-acid chain; its full sequence is PTS system fructose-like EIIB component 1 (108 aa).

The PTS EIIB type-2 domain occupies 1 to 104 (MSKKLIALCA…IIKEIEEMIA (104 aa)). C11 serves as the catalytic Phosphocysteine intermediate. C11 carries the post-translational modification Phosphocysteine; by EIIA.

It is found in the cytoplasm. It catalyses the reaction D-fructose(out) + N(pros)-phospho-L-histidyl-[protein] = D-fructose 1-phosphate(in) + L-histidyl-[protein]. Its function is as follows. The phosphoenolpyruvate-dependent sugar phosphotransferase system (sugar PTS), a major carbohydrate active transport system, catalyzes the phosphorylation of incoming sugar substrates concomitantly with their translocation across the cell membrane. The enzyme II FryABC PTS system is involved in fructose transport. This is PTS system fructose-like EIIB component 1 (fryB) from Escherichia coli O157:H7.